Consider the following 201-residue polypeptide: Small ribosomal subunit protein uS4c (201 aa).

The region spanning 90–153 is the S4 RNA-binding domain; that stretch reads MRLDNVIFRL…SSQNLVKRYL (64 aa).

It belongs to the universal ribosomal protein uS4 family. In terms of assembly, part of the 30S ribosomal subunit. Contacts protein S5. The interaction surface between S4 and S5 is involved in control of translational fidelity.

The protein localises to the plastid. It is found in the chloroplast. Functionally, one of the primary rRNA binding proteins, it binds directly to 16S rRNA where it nucleates assembly of the body of the 30S subunit. In terms of biological role, with S5 and S12 plays an important role in translational accuracy. This chain is Small ribosomal subunit protein uS4c (rps4), found in Gracilaria tenuistipitata var. liui (Red alga).